Consider the following 555-residue polypeptide: MSMFCFQCQEAARNKGCTVRGVCGKTGDVANLQDLLVYLLKGISIYAEKAKELGVVDRETGAFITRALFTTITNVNFDNKRFEEIIKEAFEVRDRIKNKFLKAYREKNGEEFDEKLPGMATWYSNDVSDFYAKGEEVGVLSTGDEDVRALRELLTYGLKGIAAYAEHAYILEEEDQEIYSFLQEGLVATTDNTLSADELTALVMKCGEVAVKTMALLDQANTSNYGHPEPTQVNLGVRNRPGILVSGHDLKDLEELLEQTEGKGVDVYTHGEMLPANAYPAFKKYDHFVGNYGNAWWQQKEEFEKFNGPILMTTNCLVPPKDSYRDRVYTTNVVGFSGVKHIRDRKPGEQKDFSPVIEHALKCDPPEELENGMIPVGFAHNAVMSVADKVVEAVKQGKIKRFVVMAGCDGRHRSRDYYTNVARNLPEDAVILTAGCAKYRYNKLNLGDIDGIPRILDAGQCNDSYSLVVIAQKLAEVFGVDDINELPISYDIAWYEQKAVAVLLALLYLGVKGIRLGPSLPAFLSPNVVKVLVDKFDIKPIGEVEEDVKAIMAGE.

Residues cysteine 5, cysteine 8, cysteine 17, and cysteine 23 each contribute to the [4Fe-4S] cluster site. Residues histidine 248, glutamate 272, cysteine 316, cysteine 408, cysteine 436, cysteine 461, glutamate 496, and lysine 498 each coordinate hybrid [4Fe-2O-2S] cluster. At cysteine 408 the chain carries Cysteine persulfide.

The protein belongs to the HCP family. Requires [4Fe-4S] cluster as cofactor. Hybrid [4Fe-2O-2S] cluster serves as cofactor.

It is found in the cytoplasm. The enzyme catalyses A + NH4(+) + H2O = hydroxylamine + AH2 + H(+). In terms of biological role, catalyzes the reduction of hydroxylamine to form NH(3) and H(2)O. This is Hydroxylamine reductase from Halothermothrix orenii (strain H 168 / OCM 544 / DSM 9562).